The following is a 40-amino-acid chain: Small polypeptide DEVIL 6 (40 aa).

Positions 9–40 (SSSRGLGGVLREQRAKLYIIKRCVVMLLCWQD) are required for DVL/RTFL small polypeptide activity. Residues 12–28 (RGLGGVLREQRAKLYII) traverse the membrane as a helical segment.

This sequence belongs to the DVL/RTFL small polypeptides family.

The protein localises to the cell membrane. In terms of biological role, small polypeptide acting as a regulatory molecule which coordinates cellular responses required for differentiation, growth and development, probably by restricting polar cell proliferation in lateral organs and coordinating socket cell recruitment and differentiation at trichome sites. The polypeptide is Small polypeptide DEVIL 6 (Arabidopsis thaliana (Mouse-ear cress)).